A 147-amino-acid polypeptide reads, in one-letter code: Myoglobin (147 aa).

Residues 2-141 (ADFDAVLKCW…IIADLEANYK (140 aa)) form the Globin domain. H60 is a binding site for nitrite. Residue H60 coordinates O2. Residue H89 coordinates heme b.

The protein belongs to the globin family. In terms of assembly, monomeric.

The protein localises to the cytoplasm. The protein resides in the sarcoplasm. It catalyses the reaction Fe(III)-heme b-[protein] + nitric oxide + H2O = Fe(II)-heme b-[protein] + nitrite + 2 H(+). It carries out the reaction H2O2 + AH2 = A + 2 H2O. Functionally, monomeric heme protein which primary function is to store oxygen and facilitate its diffusion within muscle tissues. Reversibly binds oxygen through a pentacoordinated heme iron and enables its timely and efficient release as needed during periods of heightened demand. Depending on the oxidative conditions of tissues and cells, and in addition to its ability to bind oxygen, it also has a nitrite reductase activity whereby it regulates the production of bioactive nitric oxide. Under stress conditions, like hypoxia and anoxia, it also protects cells against reactive oxygen species thanks to its pseudoperoxidase activity. This is Myoglobin (mb) from Thunnus alalunga (Albacore).